The chain runs to 363 residues: Flagellar P-ring protein (363 aa).

Residues 1–20 form the signal peptide; it reads MKLKLILAVAMLAFSLPSQA.

The protein belongs to the FlgI family. The basal body constitutes a major portion of the flagellar organelle and consists of four rings (L,P,S, and M) mounted on a central rod.

Its subcellular location is the periplasm. The protein localises to the bacterial flagellum basal body. In terms of biological role, assembles around the rod to form the L-ring and probably protects the motor/basal body from shearing forces during rotation. The polypeptide is Flagellar P-ring protein (Shewanella sp. (strain MR-7)).